The chain runs to 431 residues: Enolase (431 aa).

Gln-166 is a binding site for (2R)-2-phosphoglycerate. Residue Glu-208 is the Proton donor of the active site. Mg(2+) contacts are provided by Asp-245, Glu-288, and Asp-315. 4 residues coordinate (2R)-2-phosphoglycerate: Lys-340, Arg-369, Ser-370, and Lys-391. Catalysis depends on Lys-340, which acts as the Proton acceptor.

Belongs to the enolase family. The cofactor is Mg(2+).

The protein resides in the cytoplasm. It localises to the secreted. The protein localises to the cell surface. It catalyses the reaction (2R)-2-phosphoglycerate = phosphoenolpyruvate + H2O. The protein operates within carbohydrate degradation; glycolysis; pyruvate from D-glyceraldehyde 3-phosphate: step 4/5. In terms of biological role, catalyzes the reversible conversion of 2-phosphoglycerate (2-PG) into phosphoenolpyruvate (PEP). It is essential for the degradation of carbohydrates via glycolysis. This Clostridium botulinum (strain Eklund 17B / Type B) protein is Enolase.